The sequence spans 230 residues: U2 small nuclear ribonucleoprotein A' (230 aa).

LRR repeat units lie at residues 15-36, 48-69, 71-92, 93-114, and 115-136; these read SLRN…NADT, GDRE…GVTE, HYTS…PRLE, TLRT…KNIA, and KLET…ESLK. In terms of domain architecture, LRRCT spans 149 to 187; it reads NPVQHVPRYRSYMISILPSLRMLDFQRVTQKERDEAEAM.

It belongs to the U2 small nuclear ribonucleoprotein A family. As to quaternary structure, associated with the spliceosome.

The protein localises to the nucleus. Involved in pre-mRNA splicing. The sequence is that of U2 small nuclear ribonucleoprotein A' (LEA1) from Yarrowia lipolytica (strain CLIB 122 / E 150) (Yeast).